Consider the following 147-residue polypeptide: Protein MioC (147 aa).

One can recognise a Flavodoxin-like domain in the interval 4–143 (ITLISGSTLG…PAEEWLGSWV (140 aa)).

This sequence belongs to the flavodoxin family. MioC subfamily. As to quaternary structure, homodimer. The cofactor is FMN.

Its function is as follows. Probable electron transporter required for biotin synthase activity. This Escherichia coli (strain K12) protein is Protein MioC (mioC).